The sequence spans 547 residues: Probable bifunctional tRNA threonylcarbamoyladenosine biosynthesis protein (547 aa).

A kae1 region spans residues 1 to 329 (MDTSKDLICI…YRSDMVEVNW (329 aa)). Residues His-112, His-116, and Tyr-133 each coordinate Fe cation. Residues 133–137 (YVSGG), Asp-165, Gly-178, Glu-182, and Asn-262 contribute to the L-threonylcarbamoyladenylate site. Asp-290 is a binding site for Fe cation. The 202-residue stretch at 346–547 (IIPEHLIGKG…KEVEKRARYL (202 aa)) folds into the Protein kinase domain. ATP-binding positions include 352–360 (IGKGAEADI) and Lys-373. The active-site Proton acceptor; for kinase activity is Asp-465.

It in the N-terminal section; belongs to the KAE1 / TsaD family. This sequence in the C-terminal section; belongs to the protein kinase superfamily. Tyr protein kinase family. BUD32 subfamily. Component of the KEOPS complex that consists of Kae1, Bud32, Cgi121 and Pcc1; the whole complex dimerizes. Fe(2+) is required as a cofactor.

It localises to the cytoplasm. It carries out the reaction L-seryl-[protein] + ATP = O-phospho-L-seryl-[protein] + ADP + H(+). It catalyses the reaction L-threonyl-[protein] + ATP = O-phospho-L-threonyl-[protein] + ADP + H(+). The catalysed reaction is L-threonylcarbamoyladenylate + adenosine(37) in tRNA = N(6)-L-threonylcarbamoyladenosine(37) in tRNA + AMP + H(+). In terms of biological role, required for the formation of a threonylcarbamoyl group on adenosine at position 37 (t(6)A37) in tRNAs that read codons beginning with adenine. Is a component of the KEOPS complex that is probably involved in the transfer of the threonylcarbamoyl moiety of threonylcarbamoyl-AMP (TC-AMP) to the N6 group of A37. The Kae1 domain likely plays a direct catalytic role in this reaction. The Bud32 domain probably displays kinase activity that regulates Kae1 function. The chain is Probable bifunctional tRNA threonylcarbamoyladenosine biosynthesis protein from Methanococcus maripaludis (strain C7 / ATCC BAA-1331).